The primary structure comprises 92 residues: Large ribosomal subunit protein bL25 (92 aa).

The protein belongs to the bacterial ribosomal protein bL25 family. Part of the 50S ribosomal subunit; part of the 5S rRNA/L5/L18/L25 subcomplex. Contacts the 5S rRNA. Binds to the 5S rRNA independently of L5 and L18.

Its function is as follows. This is one of the proteins that binds to the 5S RNA in the ribosome where it forms part of the central protuberance. This chain is Large ribosomal subunit protein bL25, found in Vibrio cholerae serotype O1 (strain ATCC 39541 / Classical Ogawa 395 / O395).